The sequence spans 229 residues: Translation initiation factor 6 (229 aa).

Belongs to the eIF-6 family.

Its function is as follows. Binds to the 50S ribosomal subunit and prevents its association with the 30S ribosomal subunit to form the 70S initiation complex. The protein is Translation initiation factor 6 of Thermococcus kodakarensis (strain ATCC BAA-918 / JCM 12380 / KOD1) (Pyrococcus kodakaraensis (strain KOD1)).